Reading from the N-terminus, the 1069-residue chain is Receptor-type guanylate cyclase gcy-29 (1069 aa).

Positions 1–23 (MLPNFWNFQFIFVIFCWIPIVVS) are cleaved as a signal peptide. Topologically, residues 24 to 458 (DEKIVLKIGS…FREENCDYTQ (435 aa)) are extracellular. N-linked (GlcNAc...) asparagine glycans are attached at residues Asn161, Asn240, and Asn407. The helical transmembrane segment at 459 to 479 (TIVIATAVVCIILTVFLGIWL) threads the bilayer. The Cytoplasmic portion of the chain corresponds to 480 to 1069 (RRACETSALD…FKKKNNTFDF (590 aa)). The Protein kinase domain maps to 497–806 (RDDVQILDEE…RVRLATEIAL (310 aa)). ATP is bound by residues 503-511 (LDEEQVKSV) and Lys527. A Guanylate cyclase domain is found at 876-1006 (TVMFSDIVGF…ETVNIAAVME (131 aa)). The Mg(2+) site is built by Asp881, Ile882, and Asp925.

It belongs to the adenylyl cyclase class-4/guanylyl cyclase family. In terms of tissue distribution, expressed bilaterally in ASE and AFD sensory neurons.

The protein resides in the cell membrane. It carries out the reaction GTP = 3',5'-cyclic GMP + diphosphate. Functionally, guanylate cyclase involved in the production of the second messenger cGMP. This chain is Receptor-type guanylate cyclase gcy-29, found in Caenorhabditis elegans.